The chain runs to 201 residues: 3-isopropylmalate dehydratase small subunit (201 aa).

This sequence belongs to the LeuD family. LeuD type 1 subfamily. In terms of assembly, heterodimer of LeuC and LeuD.

It carries out the reaction (2R,3S)-3-isopropylmalate = (2S)-2-isopropylmalate. The protein operates within amino-acid biosynthesis; L-leucine biosynthesis; L-leucine from 3-methyl-2-oxobutanoate: step 2/4. Its function is as follows. Catalyzes the isomerization between 2-isopropylmalate and 3-isopropylmalate, via the formation of 2-isopropylmaleate. The protein is 3-isopropylmalate dehydratase small subunit of Shewanella pealeana (strain ATCC 700345 / ANG-SQ1).